Consider the following 428-residue polypeptide: Glutamate-1-semialdehyde 2,1-aminomutase 1 (428 aa).

Position 268 is an N6-(pyridoxal phosphate)lysine (lysine 268).

It belongs to the class-III pyridoxal-phosphate-dependent aminotransferase family. HemL subfamily. Homodimer. It depends on pyridoxal 5'-phosphate as a cofactor.

Its subcellular location is the cytoplasm. It catalyses the reaction (S)-4-amino-5-oxopentanoate = 5-aminolevulinate. It functions in the pathway porphyrin-containing compound metabolism; protoporphyrin-IX biosynthesis; 5-aminolevulinate from L-glutamyl-tRNA(Glu): step 2/2. This is Glutamate-1-semialdehyde 2,1-aminomutase 1 from Geobacillus kaustophilus (strain HTA426).